Consider the following 393-residue polypeptide: Methylthioribose-1-phosphate isomerase (393 aa).

The Proton donor role is filled by D265.

This sequence belongs to the eIF-2B alpha/beta/delta subunits family. MtnA subfamily.

The protein resides in the cytoplasm. It localises to the nucleus. The enzyme catalyses 5-(methylsulfanyl)-alpha-D-ribose 1-phosphate = 5-(methylsulfanyl)-D-ribulose 1-phosphate. It functions in the pathway amino-acid biosynthesis; L-methionine biosynthesis via salvage pathway; L-methionine from S-methyl-5-thio-alpha-D-ribose 1-phosphate: step 1/6. Catalyzes the interconversion of methylthioribose-1-phosphate (MTR-1-P) into methylthioribulose-1-phosphate (MTRu-1-P). In Cryptococcus neoformans var. neoformans serotype D (strain JEC21 / ATCC MYA-565) (Filobasidiella neoformans), this protein is Methylthioribose-1-phosphate isomerase.